We begin with the raw amino-acid sequence, 381 residues long: Arf-GAP with dual PH domain-containing protein 2 (381 aa).

The Arf-GAP domain occupies 9 to 131; sequence KRLLELLRAP…FMADGETISL (123 aa). The C4-type zinc-finger motif lies at 25-48; that stretch reads CADCGAADPDWASYKLGIFICLNC. 2 consecutive PH domains span residues 132-233 and 255-361; these read PGNR…AARL and NYLK…GVLS.

Highly expressed in placenta, spleen, kidney, skeletal muscle and adrenal gland. Weakly expressed in thyroid, liver, heart, lung, small intestine, peripheral blood leukocytes. Not detected in spinal cord, brain, stomach, trachea, colon, lymph node and bone marrow.

It localises to the cytoplasm. Its subcellular location is the cell membrane. Its function is as follows. GTPase-activating protein for the ADP ribosylation factor family (Potential). Binds phosphatidylinositol 3,4,5-trisphosphate (PtdInsP3) and inositol 1,3,4,5-tetrakisphosphate (InsP4). Possesses a stoichiometry of two binding sites for InsP4 with identical affinity. The sequence is that of Arf-GAP with dual PH domain-containing protein 2 (ADAP2) from Homo sapiens (Human).